The primary structure comprises 625 residues: ATP-dependent RNA helicase DBP9 (625 aa).

A disordered region spans residues 1–21 (MKRKLDANNVPSPEDSAGKSI). Residues 24-52 (HSFETLKLDPRLLQALTQQKFTKPTPIQA) carry the Q motif motif. Residues 55-233 (IPLALDGKDV…GLFCRNPVVL (179 aa)) enclose the Helicase ATP-binding domain. An ATP-binding site is contributed by 68–75 (AKTGSGKT). A DEAD box motif is present at residues 181–184 (DEAD). The 226-residue stretch at 260-485 (LLTYVIFKLQ…EVKPYHFDMK (226 aa)) folds into the Helicase C-terminal domain. 2 disordered regions span residues 339–393 (RKNS…EKDY) and 590–625 (IRKA…GGKH). Positions 347–357 (RKSDQCSRDSE) are enriched in basic and acidic residues. A compositionally biased stretch (polar residues) spans 361-370 (AQTSRNNDQY). Over residues 599–610 (GRGRGGKAGRGG) the composition is skewed to basic residues.

It belongs to the DEAD box helicase family. DDX56/DBP9 subfamily.

Its subcellular location is the nucleus. It is found in the nucleolus. It carries out the reaction ATP + H2O = ADP + phosphate + H(+). Its function is as follows. ATP-binding RNA helicase involved in the biogenesis of 60S ribosomal subunits and is required for the normal formation of 25S and 5.8S rRNAs. The sequence is that of ATP-dependent RNA helicase DBP9 (DBP9) from Ajellomyces capsulatus (strain NAm1 / WU24) (Darling's disease fungus).